A 177-amino-acid polypeptide reads, in one-letter code: Large ribosomal subunit protein uL6 (177 aa).

The protein belongs to the universal ribosomal protein uL6 family. Part of the 50S ribosomal subunit.

Functionally, this protein binds to the 23S rRNA, and is important in its secondary structure. It is located near the subunit interface in the base of the L7/L12 stalk, and near the tRNA binding site of the peptidyltransferase center. The sequence is that of Large ribosomal subunit protein uL6 from Natronomonas pharaonis (strain ATCC 35678 / DSM 2160 / CIP 103997 / JCM 8858 / NBRC 14720 / NCIMB 2260 / Gabara) (Halobacterium pharaonis).